Consider the following 274-residue polypeptide: NH(3)-dependent NAD(+) synthetase (274 aa).

Residue 46 to 53 (GISGGQDS) participates in ATP binding. Asp52 is a binding site for Mg(2+). Arg140 contributes to the deamido-NAD(+) binding site. Thr160 is a binding site for ATP. Glu165 contributes to the Mg(2+) binding site. Positions 173 and 180 each coordinate deamido-NAD(+). 2 residues coordinate ATP: Lys189 and Thr211. Position 260-261 (260-261 (HK)) interacts with deamido-NAD(+).

The protein belongs to the NAD synthetase family. In terms of assembly, homodimer.

The catalysed reaction is deamido-NAD(+) + NH4(+) + ATP = AMP + diphosphate + NAD(+) + H(+). It functions in the pathway cofactor biosynthesis; NAD(+) biosynthesis; NAD(+) from deamido-NAD(+) (ammonia route): step 1/1. Functionally, catalyzes the ATP-dependent amidation of deamido-NAD to form NAD. Uses ammonia as a nitrogen source. This Lysinibacillus sphaericus (strain C3-41) protein is NH(3)-dependent NAD(+) synthetase.